The primary structure comprises 165 residues: uncharacterized protein (165 aa).

Positions 1–38 (MFTVKEKNRQELEEELNDLEFQIYRMQENMKDLSKDAK) form a coiled coil.

This is an uncharacterized protein from Bacillus subtilis (strain 168).